The following is a 226-amino-acid chain: ATP-dependent dethiobiotin synthetase BioD (226 aa).

Position 12-17 (12-17) interacts with ATP; that stretch reads GVGKTV. Mg(2+) is bound at residue T16. The active site involves K37. T41 contributes to the substrate binding site. Residues D49, 108-111, 169-170, and 197-199 contribute to the ATP site; these read EGAG, GS, and PAG. Positions 49 and 108 each coordinate Mg(2+).

The protein belongs to the dethiobiotin synthetase family. Homodimer. Requires Mg(2+) as cofactor.

The protein localises to the cytoplasm. It carries out the reaction (7R,8S)-7,8-diammoniononanoate + CO2 + ATP = (4R,5S)-dethiobiotin + ADP + phosphate + 3 H(+). The protein operates within cofactor biosynthesis; biotin biosynthesis; biotin from 7,8-diaminononanoate: step 1/2. Catalyzes a mechanistically unusual reaction, the ATP-dependent insertion of CO2 between the N7 and N8 nitrogen atoms of 7,8-diaminopelargonic acid (DAPA, also called 7,8-diammoniononanoate) to form a ureido ring. In Mycobacterium bovis (strain ATCC BAA-935 / AF2122/97), this protein is ATP-dependent dethiobiotin synthetase BioD.